A 185-amino-acid polypeptide reads, in one-letter code: MPQANLTLSPHDQQVLDSIFNPLELSSLQTNNLIPAESDLKDEEPDTQAIKASRELELKAIALSESGELDGALELFQQSLNLAQRASVLNNRAQTLRLAKRDEEALDDLNKALELANDQQTRTKCHAHCQRGVLYRKLDNLEAARADFEAAAQLGSKFAREQLVEINPYAALCNQMLRQAFDQLK.

TPR repeat units follow at residues 53–86 (SRELELKAIALSESGELDGALELFQQSLNLAQRA), 88–119 (VLNNRAQTLRLAKRDEEALDDLNKALELANDQ), and 125–158 (CHAHCQRGVLYRKLDNLEAARADFEAAAQLGSKF).

The protein belongs to the TTC36 family.

The polypeptide is Tetratricopeptide repeat protein 36 homolog (Drosophila melanogaster (Fruit fly)).